A 101-amino-acid polypeptide reads, in one-letter code: Iron-sulfur cluster assembly protein CyaY (101 aa).

Belongs to the frataxin family.

In terms of biological role, involved in iron-sulfur (Fe-S) cluster assembly. May act as a regulator of Fe-S biogenesis. This is Iron-sulfur cluster assembly protein CyaY from Haemophilus influenzae (strain 86-028NP).